The sequence spans 280 residues: Lipase chaperone (280 aa).

A helical membrane pass occupies residues 5–22 (ALTIITIALGSLGAVYFL).

The protein belongs to the lipase chaperone family.

Its subcellular location is the cell inner membrane. May be involved in the folding of the extracellular lipase during its passage through the periplasm. This Vibrio vulnificus (strain CMCP6) protein is Lipase chaperone (lifO).